Consider the following 77-residue polypeptide: uncharacterized protein (77 aa).

Residues 11 to 65 (FARLRREKGLTQEEVEARSGFSQQYLSSLERGRRNPTVITLYELAQALGVSHVEL) form the HTH cro/C1-type domain. Positions 22–41 (QEEVEARSGFSQQYLSSLER) form a DNA-binding region, H-T-H motif.

This is an uncharacterized protein from Sinorhizobium fredii (strain NBRC 101917 / NGR234).